Here is a 320-residue protein sequence, read N- to C-terminus: Serpentine receptor class gamma-15 (320 aa).

A run of 7 helical transmembrane segments spans residues Thr-29–Val-49, Gly-57–Ile-77, Phe-85–Ile-105, Val-151–Pro-171, Leu-197–Thr-217, Ile-240–Thr-260, and Leu-268–Phe-288.

Belongs to the nematode receptor-like protein srg family.

Its subcellular location is the membrane. The sequence is that of Serpentine receptor class gamma-15 (srg-15) from Caenorhabditis elegans.